Here is a 219-residue protein sequence, read N- to C-terminus: Inner membrane protein YccA (219 aa).

The Periplasmic portion of the chain corresponds to M1–R22. The next 2 membrane-spanning stretches (helical) occupy residues N23–T43 and V44–F64. The Periplasmic segment spans residues L65–P73. Residues T74–L94 form a helical membrane-spanning segment. Topologically, residues N95 to D104 are cytoplasmic. A helical membrane pass occupies residues V105 to L125. Over T126–F133 the chain is Periplasmic. Residues L134–F154 form a helical membrane-spanning segment. The Cytoplasmic segment spans residues L155–L157. A helical membrane pass occupies residues P158–F178. The Periplasmic portion of the chain corresponds to E179 to T195. A helical membrane pass occupies residues V196–A216. Residues S217 to D219 lie on the Cytoplasmic side of the membrane.

Belongs to the BI1 family.

The protein resides in the cell inner membrane. This is Inner membrane protein YccA (yccA) from Escherichia coli O6:H1 (strain CFT073 / ATCC 700928 / UPEC).